An 864-amino-acid chain; its full sequence is Disintegrin and metalloproteinase domain-containing protein 15 (864 aa).

Residues 1 to 17 form the signal peptide; it reads MRLALLWALGLLGAGSP. Residues 17-49 are disordered; it reads PRPSPPLPNIGGTEEEQQASPERTQSRSLENQV. The propeptide occupies 18–208; that stretch reads RPSPPLPNIG…EQHHLRRLKR (191 aa). Residues 34–49 show a composition bias toward polar residues; the sequence is QASPERTQSRSLENQV. N-linked (GlcNAc...) asparagine glycosylation is present at Asn57. The short motif at 178–185 is the Cysteine switch element; sequence HTCAPSWH. Cys180 contributes to the Zn(2+) binding site. Residues 209–698 are Extracellular-facing; the sequence is DVVTETKIVE…QLRATSSLTT (490 aa). Positions 215-416 constitute a Peptidase M12B domain; sequence KIVELVIVAD…GMGSCLFEWP (202 aa). Residue Asn239 is glycosylated (N-linked (GlcNAc...) asparagine). Cystine bridges form between Cys325–Cys411, Cys367–Cys395, Cys369–Cys378, and Cys482–Cys502. His350 provides a ligand contact to Zn(2+). Glu351 is an active-site residue. Residues His354 and His360 each coordinate Zn(2+). Asn391 and Asn394 each carry an N-linked (GlcNAc...) asparagine glycan. Positions 423–510 constitute a Disintegrin domain; it reads SSLCGNMFVD…QCPPDIRLGD (88 aa). 2 N-linked (GlcNAc...) asparagine glycosylation sites follow: Asn608 and Asn613. 3 disulfide bridges follow: Cys659–Cys669, Cys663–Cys675, and Cys677–Cys686. In terms of domain architecture, EGF-like spans 659-687; it reads CRSKCHGHGVCDSSRHCHCDEGWAPPDCM. Residues 699–719 form a helical membrane-spanning segment; it reads GLLLSLLLLLVLVLLGASYWY. Phosphotyrosine; by HCK and LCK is present on residues Tyr717 and Tyr737. Topologically, residues 720 to 864 are cytoplasmic; that stretch reads RARLHQRLCQ…PPPAASSLYL (145 aa). Residues 738-864 form a disordered region; it reads RAAQSGPPER…PPPAASSLYL (127 aa). Positions 753-765 are enriched in polar residues; it reads RAQQMPGTKQANV. 2 stretches are compositionally biased toward pro residues: residues 768–780 and 810–825; these read PVPPSRPLPPNPV and PQGPTKPPPPRKPLPA. The SH3-binding motif lies at 816-822; sequence PPPPRKP. Low complexity predominate over residues 826–850; it reads NPQGRPPLGDLPGPGDGSLQLVVPS. An SH3-binding motif is present at residues 851 to 857; that stretch reads RPAPPPP.

In terms of assembly, interacts with ITAGV-ITGB3 (vitronectin receptor). Interacts with SH3GL2 and SNX9; this interaction occurs preferentially with ADAM15 precursor, rather than the processed form, suggesting it occurs in a secretory pathway compartment prior to the medial Golgi. Interacts with ITAG9-ITGB1. Interacts specifically with Src family protein-tyrosine kinases (PTKs). Interacts with SH3PXD2A. Interacts with ITAGV-ITGB1. Interacts with GRB2, HCK, ITSN1, ITSN2, LYN, MAPK1, MAPK3, NCF1, NCK1, nephrocystin, PTK6, SNX33, LCK and SRC. Zn(2+) serves as cofactor. Post-translationally, the precursor is cleaved by a furin endopeptidase. In terms of processing, phosphorylation increases association with PTKs. In terms of tissue distribution, predominantly expressed in brain, spinal cord, sciatic nerve and lung. Expressed at lower levels in all other tissues. In the peripheral nervous system, expressed predominantly by Schwann cells. In the central nervous system, preferentially expressed by neuronal cells.

It is found in the endomembrane system. Its subcellular location is the cell junction. The protein localises to the adherens junction. It localises to the cell projection. The protein resides in the cilium. It is found in the flagellum. Its subcellular location is the cytoplasmic vesicle. The protein localises to the secretory vesicle. It localises to the acrosome. Its function is as follows. Active metalloproteinase with gelatinolytic and collagenolytic activity. Plays a role in the wound healing process. Mediates both heterotypic intraepithelial cell/T-cell interactions and homotypic T-cell aggregation. Inhibits beta-1 integrin-mediated cell adhesion and migration of airway smooth muscle cells. Suppresses cell motility on or towards fibronectin possibly by driving alpha-v/beta-1 integrin (ITAGV-ITGB1) cell surface expression via ERK1/2 inactivation. Cleaves E-cadherin in response to growth factor deprivation. Plays a role in glomerular cell migration. Plays a role in pathological neovascularization. May play a role in cartilage remodeling. May be proteolytically processed, during sperm epididymal maturation and the acrosome reaction. May play a role in sperm-egg binding through its disintegrin domain. This chain is Disintegrin and metalloproteinase domain-containing protein 15 (Adam15), found in Rattus norvegicus (Rat).